The following is a 388-amino-acid chain: Pre-mRNA-splicing factor cwf2 (388 aa).

The disordered stretch occupies residues 43–63; sequence VKRKKQPARKQIETRPEYEME. Residues 111-138 form a C3H1-type zinc finger; that stretch reads NPGSFFCLYFARGMCSEGSKCEYLHRLP. The RRM domain occupies 174 to 248; that stretch reads YTLYVGGITP…ECLNVRWATT (75 aa). The segment at 331–352 is disordered; the sequence is PNKSQSEEGSNDDHKSVTTTES.

This sequence belongs to the RRM CWC2 family. In terms of assembly, belongs to the 40S cdc5-associated complex (or cwf complex), a spliceosome sub-complex reminiscent of a late-stage spliceosome composed of the U2, U5 and U6 snRNAs and at least brr2, cdc5, cwf2/prp3, cwf3/syf1, cwf4/syf3, cwf5/ecm2, spp42/cwf6, cwf7/spf27, cwf8, cwf9, cwf10, cwf11, cwf12, prp45/cwf13, cwf14, cwf15, cwf16, cwf17, cwf18, cwf19, cwf20, cwf21, cwf22, cwf23, cwf24, cwf25, cwf26, cyp7/cwf27, cwf28, cwf29/ist3, lea1, msl1, prp5/cwf1, prp10, prp12/sap130, prp17, prp22, sap61, sap62, sap114, sap145, slu7, smb1, smd1, smd3, smf1, smg1 and syf2.

The protein resides in the nucleus. Involved in the first step of pre-mRNA splicing. Required for cell growth and cell cycle control. Plays a role in the levels of the U1, U4, U5 and U6 snRNAs and the maintenance of the U4/U6 snRNA complex. May provide the link between the 'nineteen complex' NTC spliceosome protein complex and the spliceosome through the U6 snRNA. Associates predominantly with U6 snRNAs in assembled active spliceosomes. Binds directly to the internal stem-loop (ISL) domain of the U6 snRNA and to the pre-mRNA intron near the 5' splice site during the activation and catalytic phases of the spliceosome cycle. Involved in pre-mRNA splicing. The polypeptide is Pre-mRNA-splicing factor cwf2 (cwf2) (Schizosaccharomyces pombe (strain 972 / ATCC 24843) (Fission yeast)).